Reading from the N-terminus, the 1077-residue chain is Serine/threonine-protein kinase sel-5 (1077 aa).

A Protein kinase domain is found at 47-317; sequence VTIEKQIAEG…IYQTSVLAFE (271 aa). ATP contacts are provided by residues 53–61 and Lys75; that span reads IAEGGFAIV. Residue Asp178 is the Proton acceptor of the active site. Disordered regions lie at residues 347–444, 488–554, 616–813, and 920–1077; these read MRDG…TDGS, GFTD…SQVV, ELDS…TNPF, and LISV…PTDL. Residues 369–399 show a composition bias toward polar residues; the sequence is IQSSSKMASLSQQVPSISNISMPSGSGTVET. Over residues 491–515 the composition is skewed to basic and acidic residues; it reads DLDKPALPRDRAQTDGKRRLPHESD. Over residues 541 to 554 the composition is skewed to low complexity; the sequence is SSQQTTSKTSSQVV. Over residues 638-648 the composition is skewed to polar residues; sequence LTVSTSSSAQP. Over residues 655–679 the composition is skewed to acidic residues; that stretch reads TDEDDERQLLSETDEEEKYEIDEKE. Basic and acidic residues-rich tracts occupy residues 697 to 708 and 739 to 751; these read DEQRMNDRRRYS and DSRR…HDED. Acidic residues predominate over residues 770–780; it reads EDDGLEDDDDH. Residues 799-810 show a composition bias toward polar residues; sequence GTSTPHTQNPIT. The span at 927–936 shows a compositional bias: pro residues; that stretch reads TDPPPPPLPK. Polar residues predominate over residues 941–950; it reads ASPTQETTAT. The span at 960-969 shows a compositional bias: basic residues; the sequence is KLLKKEKKKE. Residues 970 to 989 show a composition bias toward basic and acidic residues; the sequence is KKDGKKDKLKLEEYREKGSS. Over residues 1054-1067 the composition is skewed to polar residues; it reads LTGKNASFVNTSFQ.

The protein belongs to the protein kinase superfamily. Ser/Thr protein kinase family. The cofactor is Mg(2+).

It localises to the cytoplasm. The enzyme catalyses L-seryl-[protein] + ATP = O-phospho-L-seryl-[protein] + ADP + H(+). It catalyses the reaction L-threonyl-[protein] + ATP = O-phospho-L-threonyl-[protein] + ADP + H(+). In terms of biological role, serine/threonine-protein kinase which may play a role in lin-12-mediated cell-fate decisions. The polypeptide is Serine/threonine-protein kinase sel-5 (Caenorhabditis elegans).